A 393-amino-acid chain; its full sequence is NAD(P)H-quinone oxidoreductase subunit H, chloroplastic (393 aa).

Belongs to the complex I 49 kDa subunit family. As to quaternary structure, NDH is composed of at least 16 different subunits, 5 of which are encoded in the nucleus.

Its subcellular location is the plastid. It localises to the chloroplast thylakoid membrane. It catalyses the reaction a plastoquinone + NADH + (n+1) H(+)(in) = a plastoquinol + NAD(+) + n H(+)(out). It carries out the reaction a plastoquinone + NADPH + (n+1) H(+)(in) = a plastoquinol + NADP(+) + n H(+)(out). Its function is as follows. NDH shuttles electrons from NAD(P)H:plastoquinone, via FMN and iron-sulfur (Fe-S) centers, to quinones in the photosynthetic chain and possibly in a chloroplast respiratory chain. The immediate electron acceptor for the enzyme in this species is believed to be plastoquinone. Couples the redox reaction to proton translocation, and thus conserves the redox energy in a proton gradient. The protein is NAD(P)H-quinone oxidoreductase subunit H, chloroplastic of Calycanthus floridus var. glaucus (Eastern sweetshrub).